A 445-amino-acid chain; its full sequence is Phosphoglucosamine mutase (445 aa).

The active-site Phosphoserine intermediate is Ser102. Ser102, Asp241, Asp243, and Asp245 together coordinate Mg(2+). At Ser102 the chain carries Phosphoserine.

The protein belongs to the phosphohexose mutase family. Mg(2+) is required as a cofactor. In terms of processing, activated by phosphorylation.

It carries out the reaction alpha-D-glucosamine 1-phosphate = D-glucosamine 6-phosphate. Its function is as follows. Catalyzes the conversion of glucosamine-6-phosphate to glucosamine-1-phosphate. The chain is Phosphoglucosamine mutase from Shewanella oneidensis (strain ATCC 700550 / JCM 31522 / CIP 106686 / LMG 19005 / NCIMB 14063 / MR-1).